The chain runs to 1411 residues: MSLGDVKEQLRGSRTEAKNAAKLIQVQFERVRNGGTTSVALRALKYELNILRQLCCALQENFHQHADIYCDIAADMLPHVAPHLPQPDYWVNHLMSLQYIHHALCREQTIKQCQRFYELINAQSCQMQNKSEYKYYIDIHIRHVYFFGHQLGKQSAASEAKAQLCQALQALGKLLENMLQLKAEQNEGYSELMGELNQLLGKRSIGYLKNLASLPLTAMNRLWKPLFKLIACNGGTTDQLNAQFSEYLSALLALLQLDDNVWQLQQSEAQAQTPLSLQLLHSCRELYKNQTAQNNVLQLLYNYLKLLNTQSADLKRSYIDLAKKFVHFFEHKAVSHVQEQWYLDFLFVLVRVQKHLHQIDNKVPSLERFWQCLGGQDSATAYAAHFELLQCLTSRVMKIGRGSPLAASCSGNDASCPSVLKHCVFTLGCCATVAYSSWQPEAQATLPKASQLCLASIIHYAIDVAKVTKCLTPNSSELVTFAWYLINMAEKVTTATQMYLLEHLLKPLQELRPLLSPPYAQQLVRRLFKASAHSSNPELSALLHGAYIVSMSCPARQFQQLCVFYHTPKNDTEQCLLELCEKSPLCSPLNATEKRKLYELDMLAVLANKKTPKLLQSLLRHCQTDYQMVLLGRQMRTDKRSAGQQIEELRVRLQRLGRKQQLTRLQQLILGHATVTKLLEAAETQKIKIHIKEMTEKTLEVLLVKYKLFDLTISSEMPLLELATTAIGAFESFYEQADAEPLSSDEALIDWEALIDDGIAAAMALSTMGYIPQADNAWLLLLRICRLLGDRFNYLRALSHFLPRYTQHALFDLPAEVSHAEQLLDELWPQLHAAHLLKRHHTTVLLCLCNLALYYARLDCVRHAQLLLLHAQRLRLEFEERAGKCDIIQLTIQTVRFRMCYQQRHCRSLARLPTALQQLDTLTESVRSFTCISSMDNGALILLLGDMVRDTTECTANRLSELPNFSNSLLQLLLQSGLVLRAVELLISWLWTNLRMECLDKAHSKLRLIEHFLGMQPLLESRAALEQTSNKGSLTLAPMDAQSKHMTELVGKMLVMQLEQSGACVEPIRKQQQLTMSSPRRELPLPSARPKLQRYVSLDMQQSHPMLRSSVQLQCIYFMAGCLHARLYFLNREHEQLDDFYALANAWLQQNAARGNALGHMLLVLHIYQANYLRARRRQQQAIELTETALKLAGSEQLQQRIDVNYRYNLLLQLRTAQLELEPPSKPQNPRRALTFNISPEEKLPRPVRKVATASKKPAKFAIYTEDVRPASSTTSSSSSSSSSENASSPERKSTKSKSPKRLDLNACQLIDIIDLSDDETEAVVQLQPAKSTSALSTRSTRTRAQRQPDTLVAPLRRTATAPNPLSAEATPKTIGTRARARRQNTAEQPTTTTTATPKVDSVSSRRRHRN.

Positions 1065–1071 (VEPIRKQ) are separase cleavage-site. 3 disordered regions span residues 1221–1240 (LEPP…NISP), 1268–1301 (VRPA…KSPK), and 1330–1411 (AKST…RHRN). Low complexity-rich tracts occupy residues 1270–1289 (PASS…NASS) and 1386–1398 (TAEQ…TATP).

Interacts with pim and Sse. Cleavage of thr contributes to inactivation of Sse.

Its subcellular location is the cytoplasm. In terms of biological role, required specifically for chromosome disjunction during all mitoses; maternally provided protein is sufficient until mitosis 14 then zygotic protein is required. Involved in formation and/or maintenance of epithelial structures: bud extension during Malpighian tubule development, and foregut and hindgut morphogenesis. This chain is Protein three rows (thr), found in Drosophila virilis (Fruit fly).